The following is a 621-amino-acid chain: Phosphoenolpyruvate carboxykinase [GTP] (621 aa).

Residues R83 and 217-219 (YGG) contribute to the substrate site. Positions 226 and 245 each coordinate Mn(2+). Residue S267 coordinates substrate. Residue 268–273 (MCGKTS) coordinates GTP. The active site involves C269. D286 is a Mn(2+) binding site. Position 381 to 383 (381 to 383 (NAR)) interacts with substrate. 2 residues coordinate GTP: R383 and R415.

Belongs to the phosphoenolpyruvate carboxykinase [GTP] family. It depends on Mn(2+) as a cofactor.

It localises to the cytoplasm. It carries out the reaction oxaloacetate + GTP = phosphoenolpyruvate + GDP + CO2. The protein operates within carbohydrate biosynthesis; gluconeogenesis. Catalyzes the conversion of oxaloacetate (OAA) to phosphoenolpyruvate (PEP), the rate-limiting step in the metabolic pathway that produces glucose from lactate and other precursors derived from the citric acid cycle. This is Phosphoenolpyruvate carboxykinase [GTP] from Pyrococcus horikoshii (strain ATCC 700860 / DSM 12428 / JCM 9974 / NBRC 100139 / OT-3).